Here is a 218-residue protein sequence, read N- to C-terminus: TPA-induced transmembrane protein homolog (218 aa).

A disordered region spans residues 1-54 (MEEGSRSQSPREELELSMLDGPQEELTPLNNDLRIQPNSAEDPSPAQVGKESPW). Residues 66–86 (KLWMVIVTIFLCFIIVIVISL) form a helical membrane-spanning segment.

The protein resides in the endoplasmic reticulum membrane. This is TPA-induced transmembrane protein homolog from Mus musculus (Mouse).